We begin with the raw amino-acid sequence, 287 residues long: Eukaryotic translation initiation factor 3 subunit G (287 aa).

Disordered stretches follow at residues Met-1–Thr-34 and Thr-159–Pro-184. Residues Ala-207 to Arg-285 enclose the RRM domain.

It belongs to the eIF-3 subunit G family. Component of the eukaryotic translation initiation factor 3 (eIF-3) complex.

It is found in the cytoplasm. Functionally, RNA-binding component of the eukaryotic translation initiation factor 3 (eIF-3) complex, which is involved in protein synthesis of a specialized repertoire of mRNAs and, together with other initiation factors, stimulates binding of mRNA and methionyl-tRNAi to the 40S ribosome. The eIF-3 complex specifically targets and initiates translation of a subset of mRNAs involved in cell proliferation. This subunit can bind 18S rRNA. This chain is Eukaryotic translation initiation factor 3 subunit G (tif35), found in Aspergillus oryzae (strain ATCC 42149 / RIB 40) (Yellow koji mold).